Consider the following 65-residue polypeptide: SCOCO-like protein 1 (65 aa).

Residues 8–44 adopt a coiled-coil conformation; that stretch reads RSLMEQKAMELQQQLQALLDEIDQNKQESENISRESE.

Belongs to the SLO1 family.

The chain is SCOCO-like protein 1 from Schizosaccharomyces pombe (strain 972 / ATCC 24843) (Fission yeast).